The primary structure comprises 186 residues: CoB--CoM heterodisulfide reductase iron-sulfur subunit C 2 (186 aa).

2 consecutive 4Fe-4S ferredoxin-type domains span residues 26 to 56 (GEDI…AYRT) and 67 to 99 (LDDV…TEII). C36, C39, C42, C46, C79, C82, C85, and C89 together coordinate [4Fe-4S] cluster.

It belongs to the HdrC family. The heterodisulfide reductase is composed of three subunits; HdrA, HdrB and HdrC. [4Fe-4S] cluster serves as cofactor.

It participates in cofactor metabolism; coenzyme M-coenzyme B heterodisulfide reduction; coenzyme B and coenzyme M from coenzyme M-coenzyme B heterodisulfide: step 1/1. Functionally, part of a complex that catalyzes the reversible reduction of CoM-S-S-CoB to the thiol-coenzymes H-S-CoM (coenzyme M) and H-S-CoB (coenzyme B). The sequence is that of CoB--CoM heterodisulfide reductase iron-sulfur subunit C 2 (hdrC2) from Methanocaldococcus jannaschii (strain ATCC 43067 / DSM 2661 / JAL-1 / JCM 10045 / NBRC 100440) (Methanococcus jannaschii).